The sequence spans 830 residues: ATP-dependent DNA helicase chl-1 (830 aa).

In terms of domain architecture, Helicase ATP-binding spans 1 to 403; it reads MDEFSFPFQP…HNLLYMKQLE (403 aa). 35 to 42 contacts ATP; that stretch reads SPTGTGKS. Composition is skewed to basic and acidic residues over residues 124-140 and 157-168; these read GMVE…RDTD and NDEKSEKQRDSD. The disordered stretch occupies residues 124-173; that stretch reads GMVEVSRKRKAPARDTDQFLEPQDEAAPSEEYNNDEKSEKQRDSDFFDDV. [4Fe-4S] cluster-binding residues include Cys-222, Cys-240, Cys-272, and Cys-308. A DEAH box motif is present at residues 351 to 354; the sequence is DEAH.

The protein belongs to the DEAD box helicase family. DEAH subfamily. DDX11/CHL1 sub-subfamily. [4Fe-4S] cluster serves as cofactor.

It localises to the nucleus. It carries out the reaction Couples ATP hydrolysis with the unwinding of duplex DNA at the replication fork by translocating in the 5'-3' direction. This creates two antiparallel DNA single strands (ssDNA). The leading ssDNA polymer is the template for DNA polymerase III holoenzyme which synthesizes a continuous strand.. It catalyses the reaction ATP + H2O = ADP + phosphate + H(+). Functionally, required for normal cell proliferation and chromosome stability. Plays a role in DNA repair during replication. This chain is ATP-dependent DNA helicase chl-1, found in Caenorhabditis elegans.